The chain runs to 245 residues: 1-(5-phosphoribosyl)-5-[(5-phosphoribosylamino)methylideneamino] imidazole-4-carboxamide isomerase (245 aa).

The active-site Proton acceptor is D11. The Proton donor role is filled by D132.

The protein belongs to the HisA/HisF family.

It is found in the cytoplasm. It catalyses the reaction 1-(5-phospho-beta-D-ribosyl)-5-[(5-phospho-beta-D-ribosylamino)methylideneamino]imidazole-4-carboxamide = 5-[(5-phospho-1-deoxy-D-ribulos-1-ylimino)methylamino]-1-(5-phospho-beta-D-ribosyl)imidazole-4-carboxamide. It functions in the pathway amino-acid biosynthesis; L-histidine biosynthesis; L-histidine from 5-phospho-alpha-D-ribose 1-diphosphate: step 4/9. The chain is 1-(5-phosphoribosyl)-5-[(5-phosphoribosylamino)methylideneamino] imidazole-4-carboxamide isomerase from Bacillus pumilus (strain SAFR-032).